Consider the following 471-residue polypeptide: Alpha-galactosidase 1 (471 aa).

The N-terminal stretch at 1 to 18 (MFAFYFLTACISLKGVFG) is a signal peptide. An intrachain disulfide couples C42 to C74. Residues D72 and D73 each contribute to the substrate site. Residue N105 is glycosylated (N-linked (GlcNAc...) asparagine). Cysteines 121 and 151 form a disulfide. K147 is a substrate binding site. D149 serves as the catalytic Nucleophile. A glycan (N-linked (GlcNAc...) asparagine) is linked at N175. R205 contributes to the substrate binding site. Residue D209 is the Proton donor of the active site. 2 cysteine pairs are disulfide-bonded: C221-C237 and C223-C230. Residue Q251 coordinates substrate. 7 N-linked (GlcNAc...) asparagine glycosylation sites follow: N270, N370, N403, N413, N422, N435, and N454.

This sequence belongs to the glycosyl hydrolase 27 family. As to quaternary structure, homotetramer.

The protein localises to the secreted. The catalysed reaction is Hydrolysis of terminal, non-reducing alpha-D-galactose residues in alpha-D-galactosides, including galactose oligosaccharides, galactomannans and galactolipids.. The chain is Alpha-galactosidase 1 (MEL1) from Saccharomyces cerevisiae (Baker's yeast).